Reading from the N-terminus, the 214-residue chain is Octanoyltransferase (214 aa).

The BPL/LPL catalytic domain maps to 28-203 (GSGAETLLLL…RFEGFLDEFM (176 aa)). Substrate-binding positions include 66-73 (RGGDVTYH), 133-135 (SIG), and 146-148 (GFA). The Acyl-thioester intermediate role is filled by C164.

This sequence belongs to the LipB family.

It is found in the cytoplasm. The catalysed reaction is octanoyl-[ACP] + L-lysyl-[protein] = N(6)-octanoyl-L-lysyl-[protein] + holo-[ACP] + H(+). Its pathway is protein modification; protein lipoylation via endogenous pathway; protein N(6)-(lipoyl)lysine from octanoyl-[acyl-carrier-protein]: step 1/2. In terms of biological role, catalyzes the transfer of endogenously produced octanoic acid from octanoyl-acyl-carrier-protein onto the lipoyl domains of lipoate-dependent enzymes. Lipoyl-ACP can also act as a substrate although octanoyl-ACP is likely to be the physiological substrate. The polypeptide is Octanoyltransferase (Geotalea uraniireducens (strain Rf4) (Geobacter uraniireducens)).